A 188-amino-acid polypeptide reads, in one-letter code: V-type proton ATPase subunit E (188 aa).

This sequence belongs to the V-ATPase E subunit family.

Functionally, produces ATP from ADP in the presence of a proton gradient across the membrane. The protein is V-type proton ATPase subunit E of Dictyoglomus turgidum (strain DSM 6724 / Z-1310).